A 194-amino-acid chain; its full sequence is Cysteine and glycine-rich protein 2 (194 aa).

The region spanning 10-61 is the LIM zinc-binding 1 domain; sequence CGACGRTVYHAEEVQCDGRSFHRCCFLCMVCRKNLDSTTVAIHDAEVYCKSC. Positions 64 to 69 match the Nuclear localization signal motif; the sequence is KKYGPK. Positions 120 to 171 constitute an LIM zinc-binding 2 domain; the sequence is CSRCGDSVYAAEKVIGAGKPWHKNCFRCAKCGKSLESTTLTEKEGEIYCKGC.

Its subcellular location is the nucleus. In terms of biological role, totally down-regulated in transformed cells. May therefore take part in the control of cell growth and differentiation. This chain is Cysteine and glycine-rich protein 2 (CSRP2), found in Gallus gallus (Chicken).